The sequence spans 195 residues: CASP-like protein 1B2 (195 aa).

Over 1 to 25 (MDLEKGKKPSEQAAACRIMQVKDKL) the chain is Cytoplasmic. The chain crosses the membrane as a helical span at residues 26–46 (ITLQPVVRACVFLATAVAAVI). The Extracellular portion of the chain corresponds to 47–78 (MGLNKQSYTTVVAIVGTRPVTQTFTAKFKDTP). A helical transmembrane segment spans residues 79 to 99 (AFVFFVIANAIASGYNLMVLV). The Cytoplasmic segment spans residues 100-114 (TRRILQRRAQSLSVH). Residues 115–135 (LLDMVILTLLATGSATAASMA) form a helical membrane-spanning segment. Topologically, residues 136–160 (QLGKNGNLHARWNPICDKFGSFCNH) are extracellular. A helical transmembrane segment spans residues 161-181 (GGIALVSSFIGVALMLALNLL). At 182 to 195 (SAAANSPRSNVTGQ) the chain is on the cytoplasmic side.

The protein belongs to the Casparian strip membrane proteins (CASP) family. In terms of assembly, homodimer and heterodimers.

The protein localises to the cell membrane. The protein is CASP-like protein 1B2 of Oryza sativa subsp. indica (Rice).